The following is a 125-amino-acid chain: Mediator of RNA polymerase II transcription subunit 11 (125 aa).

This sequence belongs to the Mediator complex subunit 11 family. In terms of assembly, component of the Mediator complex.

It localises to the nucleus. In terms of biological role, component of the Mediator complex, a coactivator involved in the regulated transcription of nearly all RNA polymerase II-dependent genes. Mediator functions as a bridge to convey information from gene-specific regulatory proteins to the basal RNA polymerase II transcription machinery. Mediator is recruited to promoters by direct interactions with regulatory proteins and serves as a scaffold for the assembly of a functional pre-initiation complex with RNA polymerase II and the general transcription factors. The protein is Mediator of RNA polymerase II transcription subunit 11 (MED11) of Candida glabrata (strain ATCC 2001 / BCRC 20586 / JCM 3761 / NBRC 0622 / NRRL Y-65 / CBS 138) (Yeast).